The following is an 89-amino-acid chain: MAKKSVVARNEKRKRLVEKYAAKREELLKAGDYEALRKLPRDSSASRVRNRCVLTGRGRGVYEKFGLCRHMFRKLALEGKLPGVKKASW.

This sequence belongs to the universal ribosomal protein uS14 family. In terms of assembly, part of the 30S ribosomal subunit. Contacts proteins S3 and S10.

In terms of biological role, binds 16S rRNA, required for the assembly of 30S particles and may also be responsible for determining the conformation of the 16S rRNA at the A site. The chain is Small ribosomal subunit protein uS14 from Chlorobium phaeovibrioides (strain DSM 265 / 1930) (Prosthecochloris vibrioformis (strain DSM 265)).